Reading from the N-terminus, the 94-residue chain is uncharacterized protein (94 aa).

It to M.tuberculosis Rv2632c.

This is an uncharacterized protein from Mycobacterium tuberculosis (strain CDC 1551 / Oshkosh).